The chain runs to 311 residues: Delta-1-pyrroline-5-carboxylate reductase kk1I (311 aa).

A signal peptide spans 1–31 (MTKRESNTLAVLGCGMVFLVSLLDLANRLLG). N-linked (GlcNAc...) asparagine glycosylation is present at Asn-59.

It belongs to the pyrroline-5-carboxylate reductase family.

The protein operates within secondary metabolite biosynthesis. Functionally, delta-1-pyrroline-5-carboxylate reductase; part of the gene cluster that mediates the biosynthesis of KK-1, a novel cyclic depsipeptide with 10 residues which is a promising active compound with high activity against many plant pathogens, especially Botrytis cinerea. Within the pathway, kk1I catalyzes the synthesis of the L-pipecolic acid residue of KK-1 from delta-1-pyrroline-5-carboxylate (P5C), a metabolic intermediate of lysine. The nonribosomal peptide synthetase (NRPS) kk1B catalyzes the elongation and cyclization of the decapeptide chain composed of 1 D-lactic acid residue (D-Lac), 1 pipecolic acid residue (Pip), 1 aspartic acid residue (Asp), 1 isoleucine residue (Ile), 1 glycine residue (Gly), 1 tyrosine residue (Tyr) and 4 valine residues (Val). The Asp, Ile and 3 Val residues are N-methylated by the 5 methyltransferase domains from the NRPS (found in modules 3, 5, 6, 7 and 9), whereas the Tyr residue is O-methylated by the cluster encoded O-methyltransferase kk1A. The thioesterase kk1J is likely to be involved in the corrective mechanism of peptide chain synthesis. The D-lactate dehydrogenase kk1H is involved in the synthesis of D-lactic acid from pyruvic acid, which is recognized by the A domain of the first kk1B module. The pyrroline-5-carboxylate reductase kk1I is involved in the synthesis of the L-pipecolic acid residue of KK-1 from delta-1-pyrroline-5-carboxylate (P5C), a metabolic intermediate of lysine. It still is unclear how kk1C and kk1D are involved in the production of KK-1. This is Delta-1-pyrroline-5-carboxylate reductase kk1I from Curvularia clavata.